Reading from the N-terminus, the 314-residue chain is Ferrochelatase (314 aa).

Fe cation contacts are provided by His184 and Glu259.

This sequence belongs to the ferrochelatase family.

The protein resides in the cytoplasm. It catalyses the reaction heme b + 2 H(+) = protoporphyrin IX + Fe(2+). The protein operates within porphyrin-containing compound metabolism; protoheme biosynthesis; protoheme from protoporphyrin-IX: step 1/1. Its function is as follows. Catalyzes the ferrous insertion into protoporphyrin IX. In Chlamydia trachomatis serovar D (strain ATCC VR-885 / DSM 19411 / UW-3/Cx), this protein is Ferrochelatase.